Reading from the N-terminus, the 598-residue chain is Biotin-dependent acyl-coenzyme A carboxylase alpha3 subunit (598 aa).

Residues 8 to 452 (RIAKVLVANR…SFSVHTRWIE (445 aa)) enclose the Biotin carboxylation domain. One can recognise an ATP-grasp domain in the interval 127–324 (RHIAARAQAP…LVLQQFKIAN (198 aa)). An ATP-binding site is contributed by 155–216 (AKEHGVPIAI…ERYLDKPRHV (62 aa)). The Mg(2+) site is built by Glu282, Glu295, and Asn297. Glu282, Glu295, and Asn297 together coordinate Mn(2+). The tract at residues 506–531 (PAGVIRKKPKPRKRGGHTGAATSGDA) is disordered. The segment covering 510-521 (IRKKPKPRKRGG) has biased composition (basic residues). Residues 522–598 (HTGAATSGDA…TQGTVLAEIK (77 aa)) form the Biotinyl-binding domain. Lys564 is modified (N6-biotinyllysine).

In terms of assembly, the biotin-dependent acyl-CoA carboxylase complex is composed of AccA3, which contains the biotin carboxylase (BC) and biotin carboxyl carrier protein (BCCP) domains, and an AccD protein, which contains the carboxyl transferase (CT) domain. It depends on Mg(2+) as a cofactor. The cofactor is Mn(2+). Biotin serves as cofactor.

It carries out the reaction N(6)-biotinyl-L-lysyl-[protein] + hydrogencarbonate + ATP = N(6)-carboxybiotinyl-L-lysyl-[protein] + ADP + phosphate + H(+). It participates in lipid metabolism; fatty acid biosynthesis. The protein operates within lipid metabolism; mycolic acid biosynthesis. Functionally, component of a biotin-dependent acyl-CoA carboxylase complex. This subunit catalyzes the ATP-dependent carboxylation of the biotin carried by the biotin carboxyl carrier (BCC) domain, resulting in the formation of carboxyl biotin. In Mycobacterium leprae (strain TN), this protein is Biotin-dependent acyl-coenzyme A carboxylase alpha3 subunit (bccA).